The sequence spans 117 residues: Immunoglobulin heavy variable 4-4 (117 aa).

An N-terminal signal peptide occupies residues 1–19 (MKHLWFFLLLVAAPRWVLS). Positions 20-44 (QVQLQESGPGLVKPSGTLSLTCAVS) are framework-1. The region spanning 20–117 (QVQLQESGPG…ADTAVYYCAR (98 aa)) is the Ig-like domain. C41 and C115 form a disulfide bridge. The segment at 45 to 53 (GGSISSSNW) is complementarity-determining-1. A framework-2 region spans residues 54–70 (WSWVRQPPGKGLEWIGE). The complementarity-determining-2 stretch occupies residues 71 to 77 (IYHSGST). Positions 78 to 115 (NYNPSLKSRVTISVDKSKNQFSLKLSSVTAADTAVYYC) are framework-3. The tract at residues 116–117 (AR) is complementarity-determining-3.

Immunoglobulins are composed of two identical heavy chains and two identical light chains; disulfide-linked.

The protein localises to the secreted. The protein resides in the cell membrane. Functionally, v region of the variable domain of immunoglobulin heavy chains that participates in the antigen recognition. Immunoglobulins, also known as antibodies, are membrane-bound or secreted glycoproteins produced by B lymphocytes. In the recognition phase of humoral immunity, the membrane-bound immunoglobulins serve as receptors which, upon binding of a specific antigen, trigger the clonal expansion and differentiation of B lymphocytes into immunoglobulins-secreting plasma cells. Secreted immunoglobulins mediate the effector phase of humoral immunity, which results in the elimination of bound antigens. The antigen binding site is formed by the variable domain of one heavy chain, together with that of its associated light chain. Thus, each immunoglobulin has two antigen binding sites with remarkable affinity for a particular antigen. The variable domains are assembled by a process called V-(D)-J rearrangement and can then be subjected to somatic hypermutations which, after exposure to antigen and selection, allow affinity maturation for a particular antigen. The protein is Immunoglobulin heavy variable 4-4 of Homo sapiens (Human).